The primary structure comprises 268 residues: Small ribosomal subunit protein uS2 (268 aa).

Residues 161–179 (IPCNNDKYSIALMLWMLAR) are laminin-binding.

The protein belongs to the universal ribosomal protein uS2 family. Component of the small ribosomal subunit. Mature ribosomes consist of a small (40S) and a large (60S) subunit. The 40S subunit contains about 33 different proteins and 1 molecule of RNA (18S). The 60S subunit contains about 49 different proteins and 3 molecules of RNA (28S, 5.8S and 5S). Interacts with ribosomal protein S21.

Its subcellular location is the cytoplasm. Its function is as follows. Required for the assembly and/or stability of the 40S ribosomal subunit. Required for the processing of the 20S rRNA-precursor to mature 18S rRNA in a late step of the maturation of 40S ribosomal subunits. Binds laminin. In Echinococcus granulosus (Hydatid tapeworm), this protein is Small ribosomal subunit protein uS2 (egmo3).